Consider the following 181-residue polypeptide: Shikimate kinase (181 aa).

17–22 (GVGKTT) serves as a coordination point for ATP. Thr21 serves as a coordination point for Mg(2+). Positions 39, 63, and 85 each coordinate substrate. Position 122 (Arg122) interacts with ATP. Arg141 serves as a coordination point for substrate.

The protein belongs to the shikimate kinase family. Monomer. Mg(2+) is required as a cofactor.

It is found in the cytoplasm. The enzyme catalyses shikimate + ATP = 3-phosphoshikimate + ADP + H(+). Its pathway is metabolic intermediate biosynthesis; chorismate biosynthesis; chorismate from D-erythrose 4-phosphate and phosphoenolpyruvate: step 5/7. Functionally, catalyzes the specific phosphorylation of the 3-hydroxyl group of shikimic acid using ATP as a cosubstrate. The protein is Shikimate kinase of Nostoc punctiforme (strain ATCC 29133 / PCC 73102).